We begin with the raw amino-acid sequence, 316 residues long: Probable cell division protein WhiA (316 aa).

The segment at residues 275-309 (TLKELGEMVSGGKISKSGINHRLRKIDEIAEKLRA) is a DNA-binding region (H-T-H motif).

The protein belongs to the WhiA family.

Functionally, involved in cell division and chromosome segregation. The sequence is that of Probable cell division protein WhiA from Bacillus mycoides (strain KBAB4) (Bacillus weihenstephanensis).